We begin with the raw amino-acid sequence, 869 residues long: Bifunctional uridylyltransferase/uridylyl-removing enzyme (869 aa).

Residues 1–332 (MTATPADRPD…QFDGEAVPVQ (332 aa)) are uridylyltransferase. The tract at residues 333–691 (LDAGFSLRRG…RRAVPDNDAL (359 aa)) is uridylyl-removing. Residues 450–572 (VDQHTLMVLR…VGTRERLDYL (123 aa)) enclose the HD domain. ACT domains lie at 692–771 (EVFV…PSRR) and 798–869 (RISL…LDPT).

This sequence belongs to the GlnD family. It depends on Mg(2+) as a cofactor.

The catalysed reaction is [protein-PII]-L-tyrosine + UTP = [protein-PII]-uridylyl-L-tyrosine + diphosphate. It carries out the reaction [protein-PII]-uridylyl-L-tyrosine + H2O = [protein-PII]-L-tyrosine + UMP + H(+). With respect to regulation, uridylyltransferase (UTase) activity is inhibited by glutamine, while glutamine activates uridylyl-removing (UR) activity. Modifies, by uridylylation and deuridylylation, the PII regulatory proteins (GlnB and homologs), in response to the nitrogen status of the cell that GlnD senses through the glutamine level. Under low glutamine levels, catalyzes the conversion of the PII proteins and UTP to PII-UMP and PPi, while under higher glutamine levels, GlnD hydrolyzes PII-UMP to PII and UMP (deuridylylation). Thus, controls uridylylation state and activity of the PII proteins, and plays an important role in the regulation of nitrogen assimilation and metabolism. The protein is Bifunctional uridylyltransferase/uridylyl-removing enzyme of Xanthomonas campestris pv. campestris (strain 8004).